A 100-amino-acid chain; its full sequence is UPF0213 protein CKO_04549 (100 aa).

The region spanning 2–77 (TPWYLYLIRT…KRLTKRQKER (76 aa)) is the GIY-YIG domain.

Belongs to the UPF0213 family.

The polypeptide is UPF0213 protein CKO_04549 (Citrobacter koseri (strain ATCC BAA-895 / CDC 4225-83 / SGSC4696)).